Reading from the N-terminus, the 561-residue chain is MSTEEVPVLIVGGGLTGLSAALFLSQHGVSCRLVEKHRGTTVLTRASGISSRTMELLRGVGLERTVIERGPKLVEGARWRELGQPADQIPWVVIRANGLHDLENAVTVEEPSLDVGHLSPTRPYWCGQDRLEPILRDEAVRRGARIDFNTRMEAFTADESGVTATIVDQATGEQSTVRARYLIAADGVRSPVRETLGITRTGHGTIGNAMSVLFKADLRDTVKGRRFVICYLPNPDEPGVLQLPEVPAVLQLFDEDRWIFGFFFDPRETSPEQFTDERCAQIIRTATGLPGLPVEVQMARPWEMSHNSARSYRSGRVFLAGDAAHVHPPAGAFGANGGIQDAHNLAWKLAAVLKGTAGDALLDTYEQERLPIGAAVADQAWIRHTWRLNDSEELRRALRESTLVATGYRYTSDAVLGAAYPEPIPAAHDLTGRPGYRVPHVWLGRGGERVSTVDLGGDAFVVLAGPDGGEWQAAADKVAQDLGVPVHCHPVGGDGQLTDPDGAFLGTTGLTRNGALLIRPDGFVAWRAEYLPEDAAGELRSALERILARTSGTPGGTALEG.

FAD is bound by residues Leu15, Glu35, Gln128, and Met152. Tyr231 (proton acceptor) is an active-site residue. Asp322 provides a ligand contact to FAD.

It belongs to the PheA/TfdB FAD monooxygenase family. In terms of assembly, monomer. May form oligomers up to homohexamers. FAD serves as cofactor.

It carries out the reaction tetracenomycin A2 + 2 NADPH + 2 O2 + 2 H(+) = tetracenomycin C + 2 NADP(+) + H2O. It participates in antibiotic biosynthesis; tetracenomycin C biosynthesis. In terms of biological role, involved in the biosynthesis of tetracenomycin C (TCM C). Catalyzes the triple hydroxylation of tetracenomycin A2 (TCM A2) at positions C-4, C-4a and C-12a to give tetracenomycin C (TCM C). Can use either NADH or NADPH as electron donors, but prefers NADPH under physiological conditions. The protein is Tetracenomycin A2 monooxygenase-dioxygenase of Streptomyces glaucescens.